The chain runs to 264 residues: S-adenosylmethionine decarboxylase proenzyme (264 aa).

The active-site Schiff-base intermediate with substrate; via pyruvic acid is the serine 112. Serine 112 is subject to Pyruvic acid (Ser); by autocatalysis. Histidine 117 serves as the catalytic Proton acceptor; for processing activity. Residue cysteine 140 is the Proton donor; for catalytic activity of the active site.

Belongs to the prokaryotic AdoMetDC family. Type 2 subfamily. In terms of assembly, heterooctamer of four alpha and four beta chains arranged as a tetramer of alpha/beta heterodimers. It depends on pyruvate as a cofactor. In terms of processing, is synthesized initially as an inactive proenzyme. Formation of the active enzyme involves a self-maturation process in which the active site pyruvoyl group is generated from an internal serine residue via an autocatalytic post-translational modification. Two non-identical subunits are generated from the proenzyme in this reaction, and the pyruvate is formed at the N-terminus of the alpha chain, which is derived from the carboxyl end of the proenzyme. The post-translation cleavage follows an unusual pathway, termed non-hydrolytic serinolysis, in which the side chain hydroxyl group of the serine supplies its oxygen atom to form the C-terminus of the beta chain, while the remainder of the serine residue undergoes an oxidative deamination to produce ammonia and the pyruvoyl group blocking the N-terminus of the alpha chain.

The catalysed reaction is S-adenosyl-L-methionine + H(+) = S-adenosyl 3-(methylsulfanyl)propylamine + CO2. It functions in the pathway amine and polyamine biosynthesis; S-adenosylmethioninamine biosynthesis; S-adenosylmethioninamine from S-adenosyl-L-methionine: step 1/1. Its function is as follows. Catalyzes the decarboxylation of S-adenosylmethionine to S-adenosylmethioninamine (dcAdoMet), the propylamine donor required for the synthesis of the polyamines spermine and spermidine from the diamine putrescine. The sequence is that of S-adenosylmethionine decarboxylase proenzyme from Salmonella dublin (strain CT_02021853).